A 363-amino-acid chain; its full sequence is 3-isopropylmalate dehydrogenase (363 aa).

An NAD(+)-binding site is contributed by 78–91 (GKKWDTLPINERPE). The substrate site is built by Arg-99, Arg-109, Arg-138, and Asp-227. 3 residues coordinate Mg(2+): Asp-227, Asp-251, and Asp-255. Residue 285-297 (GSAPDIQGKNIAN) coordinates NAD(+).

It belongs to the isocitrate and isopropylmalate dehydrogenases family. LeuB type 1 subfamily. Homodimer. The cofactor is Mg(2+). Requires Mn(2+) as cofactor.

Its subcellular location is the cytoplasm. It catalyses the reaction (2R,3S)-3-isopropylmalate + NAD(+) = 4-methyl-2-oxopentanoate + CO2 + NADH. Its pathway is amino-acid biosynthesis; L-leucine biosynthesis; L-leucine from 3-methyl-2-oxobutanoate: step 3/4. Catalyzes the oxidation of 3-carboxy-2-hydroxy-4-methylpentanoate (3-isopropylmalate) to 3-carboxy-4-methyl-2-oxopentanoate. The product decarboxylates to 4-methyl-2 oxopentanoate. The chain is 3-isopropylmalate dehydrogenase from Buchnera aphidicola subsp. Diuraphis noxia.